The following is a 213-amino-acid chain: Cytokinin riboside 5'-monophosphate phosphoribohydrolase LOG2 (213 aa).

Residues E79, 97 to 98, 114 to 120, and T126 contribute to the substrate site; these read RK and GYGTFEE.

This sequence belongs to the LOG family. As to expression, expressed in roots and shoots. Detected in root hairs.

The protein resides in the cytoplasm. Its subcellular location is the nucleus. The enzyme catalyses N(6)-(dimethylallyl)adenosine 5'-phosphate + H2O = N(6)-dimethylallyladenine + D-ribose 5-phosphate. It catalyses the reaction 9-ribosyl-trans-zeatin 5'-phosphate + H2O = trans-zeatin + D-ribose 5-phosphate. In terms of biological role, cytokinin-activating enzyme working in the direct activation pathway. Phosphoribohydrolase that converts inactive cytokinin nucleotides to the biologically active free-base forms. This chain is Cytokinin riboside 5'-monophosphate phosphoribohydrolase LOG2 (LOG2), found in Arabidopsis thaliana (Mouse-ear cress).